Reading from the N-terminus, the 1018-residue chain is Importin-9 (1018 aa).

An Importin N-terminal domain is found at 35-114; that stretch reads TEKRIKQLEY…RNILPNGLYD (80 aa). Residues 921–950 form a disordered region; that stretch reads GKSDEPLTDSEEDGDDEDAPGNPDKPRYIS. The span at 926-939 shows a compositional bias: acidic residues; that stretch reads PLTDSEEDGDDEDA.

It belongs to the importin beta family.

Its subcellular location is the cytoplasm. It localises to the nucleus. Nuclear transport receptor that mediates nuclear import of proteins. Serves as receptor for nuclear localization signals (NLS) in cargo substrates. Is thought to mediate docking of the importin/substrate complex to the nuclear pore complex (NPC) through binding to nucleoporin and the complex is subsequently translocated through the pore by an energy requiring, Ran-dependent mechanism. Mediates the import of pre-assembled proteasomes into the nucleus during the late stages of sperm development. This is Importin-9 from Drosophila melanogaster (Fruit fly).